The primary structure comprises 201 residues: ATP-dependent Clp protease proteolytic subunit 2 (201 aa).

Residue Ser98 is the Nucleophile of the active site. His123 is an active-site residue.

Belongs to the peptidase S14 family. In terms of assembly, fourteen ClpP subunits assemble into 2 heptameric rings which stack back to back to give a disk-like structure with a central cavity, resembling the structure of eukaryotic proteasomes.

It is found in the cytoplasm. The catalysed reaction is Hydrolysis of proteins to small peptides in the presence of ATP and magnesium. alpha-casein is the usual test substrate. In the absence of ATP, only oligopeptides shorter than five residues are hydrolyzed (such as succinyl-Leu-Tyr-|-NHMec, and Leu-Tyr-Leu-|-Tyr-Trp, in which cleavage of the -Tyr-|-Leu- and -Tyr-|-Trp bonds also occurs).. Functionally, cleaves peptides in various proteins in a process that requires ATP hydrolysis. Has a chymotrypsin-like activity. Plays a major role in the degradation of misfolded proteins. This chain is ATP-dependent Clp protease proteolytic subunit 2, found in Pseudomonas aeruginosa (strain ATCC 15692 / DSM 22644 / CIP 104116 / JCM 14847 / LMG 12228 / 1C / PRS 101 / PAO1).